The following is a 211-amino-acid chain: N-(5'-phosphoribosyl)anthranilate isomerase (211 aa).

The protein belongs to the TrpF family.

The enzyme catalyses N-(5-phospho-beta-D-ribosyl)anthranilate = 1-(2-carboxyphenylamino)-1-deoxy-D-ribulose 5-phosphate. It functions in the pathway amino-acid biosynthesis; L-tryptophan biosynthesis; L-tryptophan from chorismate: step 3/5. This is N-(5'-phosphoribosyl)anthranilate isomerase from Chromohalobacter salexigens (strain ATCC BAA-138 / DSM 3043 / CIP 106854 / NCIMB 13768 / 1H11).